Consider the following 318-residue polypeptide: D-alanine--D-alanine ligase (318 aa).

An ATP-grasp domain is found at 116 to 311 (KQVWQSLGIP…FQQLVLAILA (196 aa)). 142–197 (SAELGFPLIVKPAHEGSSIGMAKVNSEQELVAAWKDAAKYDSQVLVEQWIHGPEFT) contacts ATP. The Mg(2+) site is built by Asp-265, Glu-278, and Asn-280.

The protein belongs to the D-alanine--D-alanine ligase family. The cofactor is Mg(2+). Requires Mn(2+) as cofactor.

Its subcellular location is the cytoplasm. It carries out the reaction 2 D-alanine + ATP = D-alanyl-D-alanine + ADP + phosphate + H(+). It participates in cell wall biogenesis; peptidoglycan biosynthesis. In terms of biological role, cell wall formation. This Pseudomonas entomophila (strain L48) protein is D-alanine--D-alanine ligase.